Reading from the N-terminus, the 341-residue chain is uncharacterized protein (341 aa).

Residues serine 111, aspartate 247, and histidine 275 contribute to the active site.

The protein belongs to the DmpD/TodF/XylF esterase family.

This is an uncharacterized protein from Mycobacterium bovis (strain ATCC BAA-935 / AF2122/97).